We begin with the raw amino-acid sequence, 81 residues long: Short neurotoxin 1 (81 aa).

Residues 1-21 form the signal peptide; that stretch reads MKTLLLTLVVVTIVCLDLGYT. Disulfide bonds link Cys-24–Cys-43, Cys-38–Cys-60, Cys-62–Cys-73, and Cys-74–Cys-79.

The protein belongs to the three-finger toxin family. Short-chain subfamily. Type I alpha-neurotoxin sub-subfamily. Expressed by the venom gland.

Its subcellular location is the secreted. Its function is as follows. Binds to muscle nicotinic acetylcholine receptor (nAChR) and inhibit acetylcholine from binding to the receptor, thereby impairing neuromuscular transmission. The protein is Short neurotoxin 1 of Cryptophis nigrescens (Eastern small-eyed snake).